The sequence spans 88 residues: Elongation factor 1-beta (88 aa).

This sequence belongs to the EF-1-beta/EF-1-delta family.

Functionally, promotes the exchange of GDP for GTP in EF-1-alpha/GDP, thus allowing the regeneration of EF-1-alpha/GTP that could then be used to form the ternary complex EF-1-alpha/GTP/AAtRNA. The polypeptide is Elongation factor 1-beta (ef1b) (Thermoplasma volcanium (strain ATCC 51530 / DSM 4299 / JCM 9571 / NBRC 15438 / GSS1)).